Here is a 382-residue protein sequence, read N- to C-terminus: 26S proteasome non-ATPase regulatory subunit 6 (382 aa).

The 169-residue stretch at 186–354 (QFKEASDLYL…GVIETTRSDA (169 aa)) folds into the PCI domain.

Belongs to the proteasome subunit S10 family.

Its function is as follows. Acts as a regulatory subunit of the 26S proteasome which is involved in the ATP-dependent degradation of ubiquitinated proteins. The protein is 26S proteasome non-ATPase regulatory subunit 6 (psmD6) of Dictyostelium discoideum (Social amoeba).